The sequence spans 297 residues: MFSRLTGVSLRQGLTVQKRLFSYARPLFNSSGSERTGSGSRQYNDGARAGAEYGYTGTRIVPKLSTFYSANPHHEAHIDNLEALLRKYIKYPTVQVEERPSWLSLQEYALIGGGSRLKSTQYKQLLFMLNRLNSIDPQLVTDEISNTLAKYHKKTKLQPQRDTLKQLDEFGRSLAIGRRKTSTAKVYVVRGEGKILVNDRQLNDYFVKMKDRESVMYPLKAIDSVGKYNVFAMVSGGGITGQADALMHAIGKALVAFNPLLKTRLHRSGVLTRDYRHVERKKPGKRKARKMPTWVKR.

The interval 278–297 (VERKKPGKRKARKMPTWVKR) is disordered.

The protein belongs to the universal ribosomal protein uS9 family.

The protein localises to the mitochondrion. In Kluyveromyces lactis (strain ATCC 8585 / CBS 2359 / DSM 70799 / NBRC 1267 / NRRL Y-1140 / WM37) (Yeast), this protein is Small ribosomal subunit protein uS9m (MRPS9).